We begin with the raw amino-acid sequence, 458 residues long: O-acetyltransferase dmxR13 (458 aa).

Positions 211-231 (ELARQISQPRPPPSSDGPPPP) are disordered. Over residues 219-231 (PRPPPSSDGPPPP) the composition is skewed to pro residues.

It belongs to the trichothecene 3-O-acetyltransferase family.

Its pathway is secondary metabolite biosynthesis. In terms of biological role, O-acetyltransferase; part of the gene cluster that mediates the biosynthesis of the dimeric xanthones cryptosporioptides. The pathway begins with the synthesis of atrochrysone thioester by the polyketide synthase dmx-nrPKS. The atrochrysone carboxyl ACP thioesterase dmxR1 then breaks the thioester bond and releases the atrochrysone carboxylic acid from dmx-nrPKS. Atrochrysone carboxylic acid is decarboxylated by the decarboxylase dmxR15, and oxidized by the anthrone oxygenase dmxR16 to yield emodin. Emodin is then reduced to emodin hydroquinone by the oxidoreductase dmxR7. A-ring reduction by the short chain dehydrogenase dmxR18, dehydration by the scytalone dehydratase-like protein dmxR17 and probable spontaneous re-oxidation, results in overall deoxygenation to chrysophanol. Baeyer-Villiger oxidation by the Baeyer-Villiger monooxygenase (BVMO) dmxR6 then yields monodictylactone in equilibrium with monodictyphenone. In the case of the cryptosporioptides biosynthesis, monodictylactone is reduced at C-12 to an alcohol (by the short chain dehydrogenases dmxR12 or dmxR8) and hydroxylated at C-5 by dmxR9, yielding the electron-rich aromatic which could eliminate H(2)O to form the ortho-quinonemethide, followed by tautomerisation to paraquinone and complete the formal reduction to produce the 10-methylgroup. Conjugate addition of C-4a-OH to the resulting paraquinone by the monooxygenase dmxR10 then gives cyclohexadienone, which is then reduced at C-5 by the short chain dehydrogenase dmxR3 to give the dihydroxanthone. The 6,7-epoxide in the cryptosporioptides could be introduced by the cytochrome P450 monooxygenase dmxL3. The highly reducing PKS dmxL2 manufactures butyrate, which is further carboxylated by dmxL1 to form ethylmalonate. It is not yet clear whether the carboxylation occurs while the butyrate is attached to the ACP of dmxL2, but this unusual fungal metabolite could then be esterified to O-5 by the O-acetyltransferase dmxR13. Finally, dimerization performed by dmxR5 gives the observed dimers cryptosporioptides A, B and C as the final products of the pathway. This chain is O-acetyltransferase dmxR13, found in Cryptosporiopsis sp. (strain 8999).